A 357-amino-acid chain; its full sequence is Tetraacyldisaccharide 4'-kinase (357 aa).

49 to 56 (TIGGTGKT) is a binding site for ATP.

Belongs to the LpxK family.

The enzyme catalyses a lipid A disaccharide + ATP = a lipid IVA + ADP + H(+). The protein operates within glycolipid biosynthesis; lipid IV(A) biosynthesis; lipid IV(A) from (3R)-3-hydroxytetradecanoyl-[acyl-carrier-protein] and UDP-N-acetyl-alpha-D-glucosamine: step 6/6. Transfers the gamma-phosphate of ATP to the 4'-position of a tetraacyldisaccharide 1-phosphate intermediate (termed DS-1-P) to form tetraacyldisaccharide 1,4'-bis-phosphate (lipid IVA). This is Tetraacyldisaccharide 4'-kinase from Porphyromonas gingivalis (strain ATCC BAA-308 / W83).